Here is a 601-residue protein sequence, read N- to C-terminus: Glutathione-regulated potassium-efflux system protein KefB (601 aa).

Helical transmembrane passes span 5 to 25 (DLLLAGILFLFAAVVAVPIAA), 29 to 49 (IGAVLGYLLAGIAIGPWGLGF), 55 to 75 (EILHFSELGVVFLMFLIGLEL), 87 to 107 (IFGIGAAQVLLSAVVLAGLLM), 115 to 135 (AAVVGGIGLAMSSTAMALQLM), 152 to 172 (VLLFQDLAVIPALAMVPLLAG), 181 to 201 (LKIGMKVLAFAVMLVGGRYLL), 207 to 227 (FIAGSGVREVFTAAALLLVLG), 230 to 250 (LFMDLLGLSMALGTFIAGILL), 268 to 288 (GLLLGLFFISVGMALNLGVLY), 291 to 311 (ILWVVMSVVVLVSVKMAVLYG), 324 to 344 (LPFAGVLSQGGEFAFVLFSSA), and 356 to 376 (ALLLVTVTLSMMTTPLVMKGI). In terms of domain architecture, RCK N-terminal spans 400–519 (KPQVIIVGFG…AGVKQFSRET (120 aa)).

This sequence belongs to the monovalent cation:proton antiporter 2 (CPA2) transporter (TC 2.A.37) family. KefB subfamily. Interacts with the regulatory subunit KefG.

It localises to the cell inner membrane. Functionally, pore-forming subunit of a potassium efflux system that confers protection against electrophiles. Catalyzes K(+)/H(+) antiport. The polypeptide is Glutathione-regulated potassium-efflux system protein KefB (Cronobacter sakazakii (strain ATCC BAA-894) (Enterobacter sakazakii)).